A 313-amino-acid chain; its full sequence is Probable lysophospholipase L2 (313 aa).

It localises to the cell inner membrane. The catalysed reaction is a 1-acyl-sn-glycero-3-phosphocholine + H2O = sn-glycerol 3-phosphocholine + a fatty acid + H(+). The polypeptide is Probable lysophospholipase L2 (pldB) (Haemophilus influenzae (strain ATCC 51907 / DSM 11121 / KW20 / Rd)).